A 204-amino-acid chain; its full sequence is Holliday junction branch migration complex subunit RuvA (204 aa).

The tract at residues 1-64 (MIGKLKGTID…EDQLKLFGFM (64 aa)) is domain I. The domain II stretch occupies residues 65 to 143 (TALEREWFNL…AFAGEAINIA (79 aa)). The flexible linker stretch occupies residues 144–151 (LKQELGEG). Residues 152-204 (VAAAPVADAVSALTNLGYSRDQAANAVAAAMKTAGDGADSAKLIRLGLKELAR) are domain III.

This sequence belongs to the RuvA family. Homotetramer. Forms an RuvA(8)-RuvB(12)-Holliday junction (HJ) complex. HJ DNA is sandwiched between 2 RuvA tetramers; dsDNA enters through RuvA and exits via RuvB. An RuvB hexamer assembles on each DNA strand where it exits the tetramer. Each RuvB hexamer is contacted by two RuvA subunits (via domain III) on 2 adjacent RuvB subunits; this complex drives branch migration. In the full resolvosome a probable DNA-RuvA(4)-RuvB(12)-RuvC(2) complex forms which resolves the HJ.

Its subcellular location is the cytoplasm. Functionally, the RuvA-RuvB-RuvC complex processes Holliday junction (HJ) DNA during genetic recombination and DNA repair, while the RuvA-RuvB complex plays an important role in the rescue of blocked DNA replication forks via replication fork reversal (RFR). RuvA specifically binds to HJ cruciform DNA, conferring on it an open structure. The RuvB hexamer acts as an ATP-dependent pump, pulling dsDNA into and through the RuvAB complex. HJ branch migration allows RuvC to scan DNA until it finds its consensus sequence, where it cleaves and resolves the cruciform DNA. The polypeptide is Holliday junction branch migration complex subunit RuvA (Rhizobium etli (strain CIAT 652)).